A 446-amino-acid polypeptide reads, in one-letter code: N-succinylarginine dihydrolase (446 aa).

Substrate-binding positions include 19 to 28, N110, and 137 to 138; these read AGLSFGNVAS and HR. The active site involves E174. Position 213 (R213) interacts with substrate. The active site involves H249. Substrate contacts are provided by D251 and N364. Residue C370 is the Nucleophile of the active site.

This sequence belongs to the succinylarginine dihydrolase family. Homodimer.

The enzyme catalyses N(2)-succinyl-L-arginine + 2 H2O + 2 H(+) = N(2)-succinyl-L-ornithine + 2 NH4(+) + CO2. Its pathway is amino-acid degradation; L-arginine degradation via AST pathway; L-glutamate and succinate from L-arginine: step 2/5. Catalyzes the hydrolysis of N(2)-succinylarginine into N(2)-succinylornithine, ammonia and CO(2). In Burkholderia ambifaria (strain ATCC BAA-244 / DSM 16087 / CCUG 44356 / LMG 19182 / AMMD) (Burkholderia cepacia (strain AMMD)), this protein is N-succinylarginine dihydrolase.